The sequence spans 171 residues: MAEKRNIFLVGPMGAGKSTIGRHLADELHLDFFDSDQEIERRTGADIAWIFDLEGEDGFRAREENVINDLTDKQGIVLATGGGSIVTKAVRNRLSARGIVVYLQTTIDKQVARTQRDKRRPLLQNEDPEQVLRDLAEMRNPLYEEVADYIVDTDDQSARAVANQIISKIGL.

Position 14 to 19 (14 to 19 (GAGKST)) interacts with ATP. Serine 18 contacts Mg(2+). Positions 36, 60, and 82 each coordinate substrate. Position 120 (arginine 120) interacts with ATP. Arginine 139 is a binding site for substrate. An ATP-binding site is contributed by glutamine 156.

The protein belongs to the shikimate kinase family. In terms of assembly, monomer. Requires Mg(2+) as cofactor.

It is found in the cytoplasm. The catalysed reaction is shikimate + ATP = 3-phosphoshikimate + ADP + H(+). The protein operates within metabolic intermediate biosynthesis; chorismate biosynthesis; chorismate from D-erythrose 4-phosphate and phosphoenolpyruvate: step 5/7. Its function is as follows. Catalyzes the specific phosphorylation of the 3-hydroxyl group of shikimic acid using ATP as a cosubstrate. The chain is Shikimate kinase from Alteromonas mediterranea (strain DSM 17117 / CIP 110805 / LMG 28347 / Deep ecotype).